Reading from the N-terminus, the 619-residue chain is Threonine--tRNA ligase (619 aa).

The tract at residues 1-143 (MQLLLIHSDF…SRSIRIGEGE (143 aa)) is editing domain. The catalytic stretch occupies residues 201–500 (PHVELMRRLE…AANGGLPMLP (300 aa)). Zn(2+)-binding residues include Cys-293, His-345, and His-469.

The protein belongs to the class-II aminoacyl-tRNA synthetase family. Homodimer. Zn(2+) is required as a cofactor.

Its subcellular location is the cytoplasm. The catalysed reaction is tRNA(Thr) + L-threonine + ATP = L-threonyl-tRNA(Thr) + AMP + diphosphate + H(+). Catalyzes the attachment of threonine to tRNA(Thr) in a two-step reaction: L-threonine is first activated by ATP to form Thr-AMP and then transferred to the acceptor end of tRNA(Thr). Also edits incorrectly charged L-seryl-tRNA(Thr). This is Threonine--tRNA ligase from Methanothrix thermoacetophila (strain DSM 6194 / JCM 14653 / NBRC 101360 / PT) (Methanosaeta thermophila).